We begin with the raw amino-acid sequence, 987 residues long: GPMGPSGPRGIPGPPGAPGPQGFQGPPGEPGEPGASGPMGPRGPPGPPGKNGDDGEAGKPGRPGERGPPGPQGARGIPGTAGIPGMKGHRGFSGIDGAKGDAGPAGPKGEPGSPGENGAPGQMGPRGIPGERGRPGPPGPAGARGNDGATGAAGPPGPTGPAGPPGFPGAVGAKGEAGPQGPRGSEGPQGVRGEPGPPGPAGAAGPAGNPGADGQPGAKGANGAPGIAGAPGFPGARGPSGPQGPSGAPGPKGNSGEPGAPGNKGDAGAKGEPGPAGIQGPPGPAGEEGKRGARGEPGPTGIPGPPGERGFPGSDGVAGPKGPVGERGSPGPAGPKGSPGEAGRPGEAGIPGAKGITGSPGSPGPDGKTGPPGPAGQDGRPGPPGPPGARGQAGVMGFPGPKGAAGEPGKAGERGVPGPPGAVGAPGKDGEAGAPGATGPAGPAGERGEQGPAGSPGFQGIPGPAGPPGESGKPGEQGIPGDIGAPGPSGARGERGFPGERGVQGPPGPAGPRGSNGAPGNDGAKGDAGAPGAPGSQGAPGIQGMPGERGAAGIPGPKGDRGDAGPKGADGSPGKDGPRGITGPIGPPGPAGAPGDKGESGPNGPAGPTGARGAPGDRGEPGPPGPAGFAGPPGADGQPGAKGEPGDAGAKGDAGPPGPAGPTGAPGPIGNVGAPGPKGSPGPPGATGFPGAAGRVGPPGPSGNAGPPGPPGPAGKGETGPAGRPGEIGPPGPPGPSGEKGSPGADGPAGAPGTPGPQGIGGQRGVVGIPGQRGFPGIPGPSGEPGKQGPSGPNGERGPPGPMGPPGIAGPPGESGREGSPGAEGSPGRDGSPGPKGDRGETGPAGPPGAPGAPGAPGPVGPAGKSGDRGETGPAGPAGPIGPVGARGPTGPQGPRGDKGETGEQGDRGFSGIQGPPGPPGSPGEQGPSGASGPAGPRGPPGSAGAPGKDGINGIPGPIGPPGPRTGDAGPVGPPGPPGPPGPPGPP.

Residues 1-987 are disordered; the sequence is GPMGPSGPRG…PGPPGPPGPP (987 aa). Residues 20-39 are compositionally biased toward low complexity; that stretch reads PQGFQGPPGEPGEPGASGPM. A compositionally biased stretch (basic and acidic residues) spans 51-65; sequence NGDDGEAGKPGRPGE. Ser-93 carries the post-translational modification Phosphoserine. Low complexity-rich tracts occupy residues 101 to 117 and 141 to 153; these read DAGPAGPKGEPGSPGEN and AGARGNDGATGAA. Residues 155–167 are compositionally biased toward pro residues; the sequence is PPGPTGPAGPPGF. Low complexity-rich tracts occupy residues 201–251, 354–380, 389–408, 422–444, 516–543, 602–614, 627–654, 662–677, 686–696, and 737–752; these read AGAA…APGP, KGITGSPGSPGPDGKTGPPGPAGQDGR, ARGQAGVMGFPGPKGAAGEP, AVGAPGKDGEAGAPGATGPAGPA, NGAPGNDGAKGDAGAPGAPGSQGAPGIQ, PNGPAGPTGARGA, AGFAGPPGADGQPGAKGEPGDAGAKGDA, PTGAPGPIGNVGAPGP, ATGFPGAAGRV, and SGEKGSPGADGPAGAP. Residues 756 to 765 are compositionally biased toward gly residues; it reads GPQGIGGQRG. The span at 799 to 809 shows a compositional bias: pro residues; the sequence is PPGPMGPPGIA. Low complexity predominate over residues 811–826; sequence PPGESGREGSPGAEGS. The span at 845–860 shows a compositional bias: pro residues; that stretch reads AGPPGAPGAPGAPGPV. A compositionally biased stretch (basic and acidic residues) spans 896–907; the sequence is RGDKGETGEQGD. Over residues 923-956 the composition is skewed to low complexity; that stretch reads PGEQGPSGASGPAGPRGPPGSAGAPGKDGINGIP. The segment covering 972-987 has biased composition (pro residues); it reads VGPPGPPGPPGPPGPP.

The protein belongs to the fibrillar collagen family. Trimers of one alpha 2(I) and two alpha 1(I) chains. Post-translationally, prolines at the third position of the tripeptide repeating unit (G-X-Y) are hydroxylated in some or all of the chains. Forms the fibrils of tendon, ligaments and bones. In bones, the fibrils are mineralized with calcium hydroxyapatite.

It localises to the secreted. It is found in the extracellular space. The protein resides in the extracellular matrix. Its function is as follows. Type I collagen is a member of group I collagen (fibrillar forming collagen). This Orycteropus afer (Aardvark) protein is Collagen alpha-1(I) chain.